Here is an 841-residue protein sequence, read N- to C-terminus: Auxin response factor 24 (841 aa).

The tract at residues 109-140 is disordered; the sequence is LPEKQQDGNGSGNGNVSKDKVEEEEVVPPAAT. The segment at residues 148–250 is a DNA-binding region (TF-B3); sequence FCKTLTASDT…ELRVGVRRAM (103 aa). Disordered regions lie at residues 366 to 397, 663 to 715, and 804 to 841; these read PRPD…KRAR, QDAL…SRSC, and GALN…SENC. Residues 684-695 are compositionally biased toward basic and acidic residues; the sequence is AQHDSAREKHQS. Polar residues-rich tracts occupy residues 701 to 713 and 830 to 841; these read KNIQ…GSSR and GLSTPSLNSENC. The 85-residue stretch at 713 to 797 folds into the PB1 domain; it reads RSCKKVHKQG…HKIFIYTREE (85 aa).

Belongs to the ARF family. Homodimers and heterodimers. Expressed in roots, culms, leaves and young panicles.

The protein localises to the nucleus. Functionally, auxin response factors (ARFs) are transcriptional factors that bind specifically to the DNA sequence 5'-TGTCTC-3' found in the auxin-responsive promoter elements (AuxREs). This is Auxin response factor 24 (ARF24) from Oryza sativa subsp. japonica (Rice).